A 1510-amino-acid polypeptide reads, in one-letter code: Chromosome partition protein MukB (1510 aa).

A coiled-coil region spans residues 6 to 30 (ELENEIELESDEVIMENENVEEIVD). 75–82 (GGNGAGKS) contacts ATP. Coiled-coil stretches lie at residues 346 to 506 (QHRL…HKMS), 553 to 633 (QQTP…NLTA), 673 to 706 (MQSQLVKERELTMQRDQLEQKRLQLDEQISRLSQ), 821 to 847 (RAAREKRLEELQIERDEVAEQYAQIAF), 876 to 1064 (EELM…IQLQ), 1094 to 1149 (ERAR…RELV), and 1249 to 1305 (DAIE…QNIS). The segment at 707–824 (PDGSEDPRLN…EIPLFGRAAR (118 aa)) is flexible hinge.

The protein belongs to the SMC family. MukB subfamily. Homodimerization via its hinge domain. Binds to DNA via its C-terminal region. Interacts, and probably forms a ternary complex, with MukE and MukF via its C-terminal region. The complex formation is stimulated by calcium or magnesium. Interacts with tubulin-related protein FtsZ.

It localises to the cytoplasm. Its subcellular location is the nucleoid. Plays a central role in chromosome condensation, segregation and cell cycle progression. Functions as a homodimer, which is essential for chromosome partition. Involved in negative DNA supercoiling in vivo, and by this means organize and compact chromosomes. May achieve or facilitate chromosome segregation by condensation DNA from both sides of a centrally located replisome during cell division. The chain is Chromosome partition protein MukB from Haemophilus influenzae (strain 86-028NP).